A 148-amino-acid chain; its full sequence is 3-dehydroquinate dehydratase (148 aa).

The Proton acceptor role is filled by Tyr23. Residues Asn75, His81, and Asp88 each coordinate substrate. Residue His101 is the Proton donor of the active site. Residues 102 to 103 (LS) and Arg112 each bind substrate.

Belongs to the type-II 3-dehydroquinase family. Homododecamer.

It carries out the reaction 3-dehydroquinate = 3-dehydroshikimate + H2O. Its pathway is metabolic intermediate biosynthesis; chorismate biosynthesis; chorismate from D-erythrose 4-phosphate and phosphoenolpyruvate: step 3/7. In terms of biological role, catalyzes a trans-dehydration via an enolate intermediate. The protein is 3-dehydroquinate dehydratase of Xylella fastidiosa (strain 9a5c).